The sequence spans 633 residues: Heterogeneous nuclear ribonucleoprotein R (633 aa).

Residues 1–24 (MANQVNGNAVQLKEEEEPMDTSSV) form a disordered region. Residue alanine 2 is modified to N-acetylalanine. Residues lysine 13 and lysine 171 each participate in a glycyl lysine isopeptide (Lys-Gly) (interchain with G-Cter in SUMO2) cross-link. 3 RRM domains span residues 165 to 244 (TEVF…ISVA), 246 to 328 (NRLF…WADP), and 341 to 411 (KVLF…LAKP). Residue lysine 359 forms a Glycyl lysine isopeptide (Lys-Gly) (interchain with G-Cter in SUMO2) linkage. Residue lysine 366 is modified to N6-acetyllysine. The short motif at 412 to 418 (PDKKRKE) is the Nuclear localization signal element. The interval 412–456 (PDKKRKERQAARQASRSTAYEDYYYHPPPRMPPPIRGRGRGGGRG) is disordered. Over residues 437–446 (HPPPRMPPPI) the composition is skewed to pro residues. The interval 447–567 (RGRGRGGGRG…SRGSRGNRGG (121 aa)) is RNA-binding RGG-box. Residues 462 to 471 (PDYYGYEDYY) form a 1; approximate repeat. Residues 462-497 (PDYYGYEDYYDDYYGYDYHDYRGGYEDPYYGYDDGY) form a 3 X 11 AA approximate repeats of D-D-Y-Y-G-Y-D-Y-H-D-Y region. Copy 2 of the repeat occupies 472-482 (DDYYGYDYHDY). One copy of the 3; approximate repeat lies at 488–497 (DPYYGYDDGY). The span at 501–510 (GRGGGRGGRG) shows a compositional bias: gly residues. The segment at 501-633 (GRGGGRGGRG…YQDTYGQQWK (133 aa)) is disordered. Positions 511 to 524 (APPPPRGRGAPPPR) are enriched in pro residues. Low complexity predominate over residues 525–541 (GRAGYSQRGAPLGPPRG). Over residues 558-570 (SRGSRGNRGGNVG) the composition is skewed to gly residues. Residues 588 to 604 (TNNQQNWGSQPIAQQPL) are compositionally biased toward polar residues. Positions 605–621 (QQGGDYSGNYGYNNDNQ) are enriched in low complexity. The segment covering 622–633 (EFYQDTYGQQWK) has biased composition (polar residues).

In terms of assembly, identified in the spliceosome C complex. Identified in a IGF2BP1-dependent mRNP granule complex containing untranslated mRNAs. Interacts with GTPBP1.

It is found in the nucleus. The protein localises to the microsome. The protein resides in the nucleoplasm. It localises to the cytoplasm. In terms of biological role, component of ribonucleosomes, which are complexes of at least 20 other different heterogeneous nuclear ribonucleoproteins (hnRNP). hnRNP play an important role in processing of precursor mRNA in the nucleus. This chain is Heterogeneous nuclear ribonucleoprotein R (HNRNPR), found in Homo sapiens (Human).